We begin with the raw amino-acid sequence, 162 residues long: Crossover junction endodeoxyribonuclease RuvC (162 aa).

Active-site residues include Asp7, Glu67, and Asp140. Mg(2+) is bound by residues Asp7, Glu67, and Asp140.

Belongs to the RuvC family. As to quaternary structure, homodimer which binds Holliday junction (HJ) DNA. The HJ becomes 2-fold symmetrical on binding to RuvC with unstacked arms; it has a different conformation from HJ DNA in complex with RuvA. In the full resolvosome a probable DNA-RuvA(4)-RuvB(12)-RuvC(2) complex forms which resolves the HJ. Requires Mg(2+) as cofactor.

The protein localises to the cytoplasm. The catalysed reaction is Endonucleolytic cleavage at a junction such as a reciprocal single-stranded crossover between two homologous DNA duplexes (Holliday junction).. Functionally, the RuvA-RuvB-RuvC complex processes Holliday junction (HJ) DNA during genetic recombination and DNA repair. Endonuclease that resolves HJ intermediates. Cleaves cruciform DNA by making single-stranded nicks across the HJ at symmetrical positions within the homologous arms, yielding a 5'-phosphate and a 3'-hydroxyl group; requires a central core of homology in the junction. The consensus cleavage sequence is 5'-(A/T)TT(C/G)-3'. Cleavage occurs on the 3'-side of the TT dinucleotide at the point of strand exchange. HJ branch migration catalyzed by RuvA-RuvB allows RuvC to scan DNA until it finds its consensus sequence, where it cleaves and resolves the cruciform DNA. In Wolinella succinogenes (strain ATCC 29543 / DSM 1740 / CCUG 13145 / JCM 31913 / LMG 7466 / NCTC 11488 / FDC 602W) (Vibrio succinogenes), this protein is Crossover junction endodeoxyribonuclease RuvC.